Here is a 344-residue protein sequence, read N- to C-terminus: Fructose-bisphosphate aldolase (344 aa).

Ser-53 is a binding site for D-glyceraldehyde 3-phosphate. Catalysis depends on Asp-95, which acts as the Proton donor. Zn(2+) is bound by residues His-96, Asp-131, Glu-161, and His-212. Gly-213 provides a ligand contact to dihydroxyacetone phosphate. Position 252 (His-252) interacts with Zn(2+). Dihydroxyacetone phosphate-binding positions include 253–255 and 274–277; these read GGS and NVDT.

It belongs to the class II fructose-bisphosphate aldolase family. It depends on Zn(2+) as a cofactor.

The enzyme catalyses beta-D-fructose 1,6-bisphosphate = D-glyceraldehyde 3-phosphate + dihydroxyacetone phosphate. Its pathway is carbohydrate degradation; glycolysis; D-glyceraldehyde 3-phosphate and glycerone phosphate from D-glucose: step 4/4. Its function is as follows. Catalyzes the aldol condensation of dihydroxyacetone phosphate (DHAP or glycerone-phosphate) with glyceraldehyde 3-phosphate (G3P) to form fructose 1,6-bisphosphate (FBP) in gluconeogenesis and the reverse reaction in glycolysis. The polypeptide is Fructose-bisphosphate aldolase (fba) (Mycobacterium bovis (strain ATCC BAA-935 / AF2122/97)).